A 436-amino-acid chain; its full sequence is Probable G-protein coupled receptor C06G4.5 (436 aa).

Residues 1–53 (MSTNLVDYVDDSYLNQSMNSENGLDSVTQIMYDMKKYNIVNDVLPPPNHEDLH) are Extracellular-facing. Residue Asn-15 is glycosylated (N-linked (GlcNAc...) asparagine). The helical transmembrane segment at 54–74 (VVIMAVSYLLLFLLGTCGNVA) threads the bilayer. The Cytoplasmic portion of the chain corresponds to 75–94 (VLTTIYHVIRSSRATLDNTL). The helical transmembrane segment at 95–115 (IYVIVLSCVDFGVCLSLPITV) threads the bilayer. At 116 to 132 (IDQILGFWMFGKIPCKL) the chain is on the extracellular side. A helical transmembrane segment spans residues 133-153 (HAVFENFGKILSALILTAMSF). Residues 154-171 (DRYAGVCHPQRKRLRSRN) lie on the Cytoplasmic side of the membrane. The helical transmembrane segment at 172–192 (FAITILLVLAVYAFITLCPLL) threads the bilayer. At 193 to 230 (WSFTAREIILYAKETAPGMLTRMKIEKCTVDIDSQMFT) the chain is on the extracellular side. Residues 231-251 (AFTIYQFILCYCTPLVLIAFF) traverse the membrane as a helical segment. Topologically, residues 252–281 (YTKLLSKLREHTRTFKSSQIPFLHISLYTL) are cytoplasmic. A helical membrane pass occupies residues 282 to 302 (AVACFYFLCWTPFWMATLFAV). Residues 303 to 316 (YLENSANSSSVPPV) lie on the Extracellular side of the membrane. N-linked (GlcNAc...) asparagine glycosylation is present at Asn-309. A helical membrane pass occupies residues 317 to 337 (FVYIMYFIHALPFTNSAINWI). At 338–436 (LYGALNGQLQ…LLSNHNPTFL (99 aa)) the chain is on the cytoplasmic side.

This sequence belongs to the G-protein coupled receptor 1 family.

Its subcellular location is the cell membrane. Its function is as follows. Putative receptor. The chain is Probable G-protein coupled receptor C06G4.5 from Caenorhabditis elegans.